We begin with the raw amino-acid sequence, 160 residues long: SsrA-binding protein (160 aa).

It belongs to the SmpB family.

Its subcellular location is the cytoplasm. Required for rescue of stalled ribosomes mediated by trans-translation. Binds to transfer-messenger RNA (tmRNA), required for stable association of tmRNA with ribosomes. tmRNA and SmpB together mimic tRNA shape, replacing the anticodon stem-loop with SmpB. tmRNA is encoded by the ssrA gene; the 2 termini fold to resemble tRNA(Ala) and it encodes a 'tag peptide', a short internal open reading frame. During trans-translation Ala-aminoacylated tmRNA acts like a tRNA, entering the A-site of stalled ribosomes, displacing the stalled mRNA. The ribosome then switches to translate the ORF on the tmRNA; the nascent peptide is terminated with the 'tag peptide' encoded by the tmRNA and targeted for degradation. The ribosome is freed to recommence translation, which seems to be the essential function of trans-translation. The protein is SsrA-binding protein of Cronobacter sakazakii (strain ATCC BAA-894) (Enterobacter sakazakii).